Reading from the N-terminus, the 227-residue chain is Cytochrome c oxidase subunit 2 (227 aa).

Topologically, residues 1–14 (MAYPLQLGLQDATS) are mitochondrial intermembrane. A helical membrane pass occupies residues 15 to 45 (PIMEELMNFHDHTLMIVFLISSLVLYIISLM). Topologically, residues 46–59 (LTTKLTHTSTMDAQ) are mitochondrial matrix. The helical transmembrane segment at 60–87 (EVETIWTILPAAILVLIALPSLRILYMM) threads the bilayer. The Mitochondrial intermembrane segment spans residues 88 to 227 (DEINNPVLTV…YFENWSASMI (140 aa)). His-161, Cys-196, Glu-198, Cys-200, His-204, and Met-207 together coordinate Cu cation. A Mg(2+)-binding site is contributed by Glu-198. Tyr-218 bears the Phosphotyrosine mark.

The protein belongs to the cytochrome c oxidase subunit 2 family. As to quaternary structure, component of the cytochrome c oxidase (complex IV, CIV), a multisubunit enzyme composed of 14 subunits. The complex is composed of a catalytic core of 3 subunits MT-CO1, MT-CO2 and MT-CO3, encoded in the mitochondrial DNA, and 11 supernumerary subunits COX4I, COX5A, COX5B, COX6A, COX6B, COX6C, COX7A, COX7B, COX7C, COX8 and NDUFA4, which are encoded in the nuclear genome. The complex exists as a monomer or a dimer and forms supercomplexes (SCs) in the inner mitochondrial membrane with NADH-ubiquinone oxidoreductase (complex I, CI) and ubiquinol-cytochrome c oxidoreductase (cytochrome b-c1 complex, complex III, CIII), resulting in different assemblies (supercomplex SCI(1)III(2)IV(1) and megacomplex MCI(2)III(2)IV(2)). Found in a complex with TMEM177, COA6, COX18, COX20, SCO1 and SCO2. Interacts with TMEM177 in a COX20-dependent manner. Interacts with COX20. Interacts with COX16. It depends on Cu cation as a cofactor.

Its subcellular location is the mitochondrion inner membrane. It catalyses the reaction 4 Fe(II)-[cytochrome c] + O2 + 8 H(+)(in) = 4 Fe(III)-[cytochrome c] + 2 H2O + 4 H(+)(out). Its function is as follows. Component of the cytochrome c oxidase, the last enzyme in the mitochondrial electron transport chain which drives oxidative phosphorylation. The respiratory chain contains 3 multisubunit complexes succinate dehydrogenase (complex II, CII), ubiquinol-cytochrome c oxidoreductase (cytochrome b-c1 complex, complex III, CIII) and cytochrome c oxidase (complex IV, CIV), that cooperate to transfer electrons derived from NADH and succinate to molecular oxygen, creating an electrochemical gradient over the inner membrane that drives transmembrane transport and the ATP synthase. Cytochrome c oxidase is the component of the respiratory chain that catalyzes the reduction of oxygen to water. Electrons originating from reduced cytochrome c in the intermembrane space (IMS) are transferred via the dinuclear copper A center (CU(A)) of subunit 2 and heme A of subunit 1 to the active site in subunit 1, a binuclear center (BNC) formed by heme A3 and copper B (CU(B)). The BNC reduces molecular oxygen to 2 water molecules using 4 electrons from cytochrome c in the IMS and 4 protons from the mitochondrial matrix. In Micaelamys namaquensis (Namaqua rock rat), this protein is Cytochrome c oxidase subunit 2 (MT-CO2).